The primary structure comprises 402 residues: MSSSSFSIENVRSQFPALEKRQIFGDNAGGSQVLGTVAKRQLSPITEYLIETNVQLGASYKTSTQSTAIFDNAYKAAAKYINAGIDEIVIGASTTQVFRNLAAALKLQPGDELILTNVDHESNIDPWLHYAALNNATIKWWTPSDLNNPKLDPEQLRSLLTNKTRLVACTHCSNILGTINNIKAIADVVHEIPGALLAVDGVAYAPHRAIDVKELGADFYAFSWYKVYGPHISLLYGSKAAQAQLSSLGHFFNPDGSLMDKLELAAASYELTQAIIPLTAYFGENPKQTWDAIAEHEQKLQTRLIEYLVSKPQITVYGETSTDKAVRVPTVSFTVEGMSSQSVVEAVEAVSHAGIRWGHFFSKRLVGSILGLSDDGVVRVSLVHYNTVEEVDQIIVALEMVL.

Pyridoxal 5'-phosphate contacts are provided by residues 137–138 (TI), D218, and 282–283 (FG).

It belongs to the class-V pyridoxal-phosphate-dependent aminotransferase family. Csd subfamily.

In terms of biological role, aminotransferase-like protein; part of the Fg3_54/C64 gene cluster that mediates the biosynthesis of the octapeptide fusaoctaxin A, a virulence factor that is required for cell-to-cell invasiveness of plant host. The 2 nonribosomal peptide synthetases NRPS9 and NRPS5 form an assembly line which likely utilizes GABA as a starter unit (loaded on the unique module M1 of NRPS9) and sequentially incorporates seven extender units composed of the residues L-Ala, L-allo-Ile, L-Ser, L-Val, L-Ser, L-Leu and L-Leu, respectively. During the process, each of the residues that are tethered on modules M3-M7 of NRPS5 containing an E domain can undergo an epimerization reaction to produce a D-configuration before the transpeptidation reaction occurs. The elongation of the peptidyl chain might be terminated by module M8-mediated L-Leu incorporation, followed by R domain-catalyzed 4 electron reduction to release the resulting octapeptide from the assembly line as an alcohol. Fusaoctaxin A is cleaved by the cluster specific ABC transporter FGM5 to the pentapeptide fusapentaxin A and the tripeptide fusatrixin A. The other enzymes from the cluster, FGM1, FGM2, FGM3 and FGM9 seem not to be involved in the biosynthesis of fusaoctaxin A and their functions have still to be determined. The protein is Aminotransferase-like protein FGM3 of Gibberella zeae (strain ATCC MYA-4620 / CBS 123657 / FGSC 9075 / NRRL 31084 / PH-1) (Wheat head blight fungus).